A 485-amino-acid polypeptide reads, in one-letter code: MATEPKKAAAQNSPEDEGLLIVKIEEEEFIHGQDTCLQRSELLKQELCRQLFRQFCYQDSPGPREALSRLRELCCQWLKPEIHTKEQILELLVLEQFLTILPGDLQAWVHEHYPESGEEAVTILEDLERGTDEAVLQVQAHEHGQEIFQKKVSPPGPALNVKLQPVETKAHFDSSEPQLLWDCDNESENSRSMPKLEIFEKIESQRIISGRISGYISEASGESQDICKSAGRVKRQWEKESGESQRLSSAQDEGFGKILTHKNTVRGEIISHDGCERRLNLNSNEFTHQKSCKHGTCDQSFKWNSDFINHQIIYAGEKNHQYGKSFKSPKLAKHAAVFSGDKTHQCNECGKAFRHSSKLARHQRIHTGERCYECNECGKSFAESSDLTRHRRIHTGERPFGCKECGRAFNLNSHLIRHQRIHTREKPYECSECGKTFRVSSHLIRHFRIHTGEKPYECSECGRAFSQSSNLSQHQRIHMRENLLM.

Lysine 23 participates in a covalent cross-link: Glycyl lysine isopeptide (Lys-Gly) (interchain with G-Cter in SUMO2). The 66-residue stretch at 62–127 (GPREALSRLR…EEAVTILEDL (66 aa)) folds into the SCAN box domain. Residues lysine 162 and lysine 195 each participate in a glycyl lysine isopeptide (Lys-Gly) (interchain with G-Cter in SUMO2) cross-link. The C2H2-type 1; degenerate zinc-finger motif lies at 290–314 (KSCKHGTCDQSFKWNSDFINHQIIY). 5 consecutive C2H2-type zinc fingers follow at residues 344–366 (HQCN…QRIH), 372–394 (YECN…RRIH), 400–422 (FGCK…QRIH), 428–450 (YECS…FRIH), and 456–478 (YECS…QRIH).

It belongs to the krueppel C2H2-type zinc-finger protein family. As to expression, expressed specifically in testis.

It is found in the nucleus. Functionally, may be involved in transcriptional regulation. The sequence is that of Zinc finger protein 165 (ZNF165) from Homo sapiens (Human).